Consider the following 252-residue polypeptide: Probable transcriptional regulatory protein A1E_02520 (252 aa).

This sequence belongs to the TACO1 family.

The protein resides in the cytoplasm. This Rickettsia canadensis (strain McKiel) protein is Probable transcriptional regulatory protein A1E_02520.